A 201-amino-acid chain; its full sequence is Small ribosomal subunit protein uS4c (201 aa).

Residues 89–152 (MRLDNILFRL…NSRTLVQNLI (64 aa)) enclose the S4 RNA-binding domain.

The protein belongs to the universal ribosomal protein uS4 family. In terms of assembly, part of the 30S ribosomal subunit. Contacts protein S5. The interaction surface between S4 and S5 is involved in control of translational fidelity.

It is found in the plastid. The protein localises to the chloroplast. Its function is as follows. One of the primary rRNA binding proteins, it binds directly to 16S rRNA where it nucleates assembly of the body of the 30S subunit. With S5 and S12 plays an important role in translational accuracy. This is Small ribosomal subunit protein uS4c (rps4) from Crucihimalaya wallichii (Rock-cress).